We begin with the raw amino-acid sequence, 415 residues long: Serine/threonine transporter SstT (415 aa).

Helical transmembrane passes span 23 to 43 (ILVG…AAIA), 47 to 67 (LGTL…LMLV), 85 to 105 (ILWL…LFSF), 144 to 164 (ALLK…GFAL), 181 to 201 (AVTF…FGLV), 220 to 240 (LMVL…LIVF), 303 to 323 (GAAI…GIAV), and 333 to 353 (VVAS…LLLI).

Belongs to the dicarboxylate/amino acid:cation symporter (DAACS) (TC 2.A.23) family.

It is found in the cell inner membrane. The enzyme catalyses L-serine(in) + Na(+)(in) = L-serine(out) + Na(+)(out). It carries out the reaction L-threonine(in) + Na(+)(in) = L-threonine(out) + Na(+)(out). In terms of biological role, involved in the import of serine and threonine into the cell, with the concomitant import of sodium (symport system). This is Serine/threonine transporter SstT from Cronobacter sakazakii (strain ATCC BAA-894) (Enterobacter sakazakii).